Reading from the N-terminus, the 142-residue chain is Glia maturation factor beta (142 aa).

Residue serine 2 is modified to N-acetylserine. In terms of domain architecture, ADF-H spans 4–139 (SLVVCDVAED…TEEWLREKLG (136 aa)).

The protein belongs to the actin-binding proteins ADF family. GMF subfamily. Post-translationally, phosphorylated; stimulated by phorbol ester.

This protein causes differentiation of brain cells, stimulation of neural regeneration, and inhibition of proliferation of tumor cells. This Mus musculus (Mouse) protein is Glia maturation factor beta (Gmfb).